We begin with the raw amino-acid sequence, 293 residues long: MRPLMRNRASERGVDPAPSRWAWRMQRLLLTPAFLLFLRAGVPVLVLFGAATWWLSDTDRRAAIWETVAEARASFETRPEFMVQLMAVDGATDALAAEIRKEVPLDFPLSSFDLNLSDMRDRIVALDPVKSATVRIRPGGVLHIDVEPRIPVVIWRNPQGLTAVDVNGIHVGPIAQRMDRPDLPLIAGTGATEHVKEALNLYRAAGPLGTRLRGIVRVGERRWDIVLDRDQRIMLPKEGPVEALDRVIALDTAQDILSRDVNRVDLRLGARPTVKMSDYATNVWWEIRQVSRQ.

Residues 1–27 (MRPLMRNRASERGVDPAPSRWAWRMQR) are Cytoplasmic-facing. The chain crosses the membrane as a helical span at residues 28-48 (LLLTPAFLLFLRAGVPVLVLF). Residues 49–293 (GAATWWLSDT…WWEIRQVSRQ (245 aa)) are Periplasmic-facing. The POTRA domain occupies 81–149 (FMVQLMAVDG…GVLHIDVEPR (69 aa)).

Belongs to the FtsQ/DivIB family. FtsQ subfamily.

The protein resides in the cell inner membrane. Functionally, essential cell division protein. This is Cell division protein FtsQ from Roseobacter litoralis (strain ATCC 49566 / DSM 6996 / JCM 21268 / NBRC 15278 / OCh 149).